Here is a 484-residue protein sequence, read N- to C-terminus: 3-isopropylmalate dehydratase large subunit (484 aa).

The [4Fe-4S] cluster site is built by cysteine 352, cysteine 412, and cysteine 415. The interval 462-484 (GTLSSPSDLDPAPESAAVSSSAA) is disordered.

Belongs to the aconitase/IPM isomerase family. LeuC type 1 subfamily. Heterodimer of LeuC and LeuD. Requires [4Fe-4S] cluster as cofactor.

It carries out the reaction (2R,3S)-3-isopropylmalate = (2S)-2-isopropylmalate. The protein operates within amino-acid biosynthesis; L-leucine biosynthesis; L-leucine from 3-methyl-2-oxobutanoate: step 2/4. Functionally, catalyzes the isomerization between 2-isopropylmalate and 3-isopropylmalate, via the formation of 2-isopropylmaleate. The chain is 3-isopropylmalate dehydratase large subunit from Arthrobacter sp. (strain FB24).